A 289-amino-acid polypeptide reads, in one-letter code: MSFVAYEELIKEGDTAILSLGHGAMVAVRVQRGAQTQTRHGVLRHSVDLIGRPFGSKVTCGRGGWVYVLHPTPELWTLNLPHRTQILYSTDIALITMMLELRPGSVVCESGTGSGSVSHAIIRTIAPTGHLHTVEFHQQRAEKAREEFQEHRVGRWVTVRTQDVCRSGFGVSHVADAVFLDIPSPWEAVGHAWDALKVEGGRFCSFSPCIEQVQRTCQALAARGFSELSTLEVLPQVYNVRTVSLPPPDLGTGTDGPAGSDTSPFRSGTPMKEAVGHTGYLTFATKTPG.

Ser2 bears the N-acetylserine mark. Residues 20–22 (LGH), 35–42 (QTQTRHGV), 64–65 (GW), 85–89 (QILYS), and 110–117 (SGTGSGSV) each bind substrate. S-adenosyl-L-methionine contacts are provided by residues Leu87, 114 to 116 (SGS), Glu135, Arg140, 163 to 164 (DV), and Asp181. Residues 180 to 183 (LDIP) and 205 to 212 (SFSPCIEQ) contribute to the substrate site. The tract at residues 245 to 272 (LPPPDLGTGTDGPAGSDTSPFRSGTPMK) is disordered. Low complexity predominate over residues 250–259 (LGTGTDGPAG). The residue at position 263 (Ser263) is a Phosphoserine. Thr278 is a substrate binding site.

The protein belongs to the class I-like SAM-binding methyltransferase superfamily. TRM61 family. In terms of assembly, heterotetramer; composed of two copies of TRMT6 and two copies of TRMT61A.

The protein resides in the nucleus. It carries out the reaction adenosine(58) in tRNA + S-adenosyl-L-methionine = N(1)-methyladenosine(58) in tRNA + S-adenosyl-L-homocysteine + H(+). The catalysed reaction is an adenosine in mRNA + S-adenosyl-L-methionine = an N(1)-methyladenosine in mRNA + S-adenosyl-L-homocysteine + H(+). Catalytic subunit of tRNA (adenine-N(1)-)-methyltransferase, which catalyzes the formation of N(1)-methyladenine at position 58 (m1A58) in initiator methionyl-tRNA. Catalytic subunit of mRNA N(1)-methyltransferase complex, which mediates methylation of adenosine residues at the N(1) position of a small subset of mRNAs: N(1) methylation takes place in tRNA T-loop-like structures of mRNAs and is only present at low stoichiometries. The polypeptide is tRNA (adenine(58)-N(1))-methyltransferase catalytic subunit TRMT61A (TRMT61A) (Homo sapiens (Human)).